The primary structure comprises 512 residues: Bifunctional pantoate ligase/cytidylate kinase (512 aa).

A pantoate--beta-alanine ligase region spans residues 1-276; that stretch reads MKLQTSADLQ…CGEARLIDHR (276 aa). 27-34 is a binding site for ATP; sequence MGALHQGH. His34 functions as the Proton donor in the catalytic mechanism. Gln58 provides a ligand contact to (R)-pantoate. Gln58 lines the beta-alanine pocket. 147–150 lines the ATP pocket; that stretch reads GEKD. Gln153 serves as a coordination point for (R)-pantoate. ATP is bound by residues Leu176 and 184-187; that span reads LSSR. The interval 277–512 is cytidylate kinase; that stretch reads VLMSRLPILA…VPVEALNADA (236 aa).

In the N-terminal section; belongs to the pantothenate synthetase family. The protein in the C-terminal section; belongs to the cytidylate kinase family. Type 1 subfamily.

It is found in the cytoplasm. The catalysed reaction is (R)-pantoate + beta-alanine + ATP = (R)-pantothenate + AMP + diphosphate + H(+). It catalyses the reaction CMP + ATP = CDP + ADP. It carries out the reaction dCMP + ATP = dCDP + ADP. Its pathway is cofactor biosynthesis; (R)-pantothenate biosynthesis; (R)-pantothenate from (R)-pantoate and beta-alanine: step 1/1. In terms of biological role, catalyzes the condensation of pantoate with beta-alanine in an ATP-dependent reaction via a pantoyl-adenylate intermediate. Catalyzes the transfer of a phosphate group from ATP to either CMP or dCMP to form CDP or dCDP and ADP, respectively. This is Bifunctional pantoate ligase/cytidylate kinase from Synechococcus sp. (strain RCC307).